The primary structure comprises 339 residues: DNA-directed RNA polymerase subunit alpha (339 aa).

Residues 1 to 233 form an alpha N-terminal domain (alpha-NTD) region; the sequence is MVREEVAGST…DLFLPFLHAE (233 aa). The segment at 266-339 is alpha C-terminal domain (alpha-CTD); it reads GIPLNCIFID…IDLLKNKLSF (74 aa).

It belongs to the RNA polymerase alpha chain family. As to quaternary structure, in plastids the minimal PEP RNA polymerase catalytic core is composed of four subunits: alpha, beta, beta', and beta''. When a (nuclear-encoded) sigma factor is associated with the core the holoenzyme is formed, which can initiate transcription.

It localises to the plastid. It is found in the chloroplast. The enzyme catalyses RNA(n) + a ribonucleoside 5'-triphosphate = RNA(n+1) + diphosphate. DNA-dependent RNA polymerase catalyzes the transcription of DNA into RNA using the four ribonucleoside triphosphates as substrates. This chain is DNA-directed RNA polymerase subunit alpha, found in Hordeum bulbosum (Bulbous barley).